Here is a 205-residue protein sequence, read N- to C-terminus: Holliday junction branch migration complex subunit RuvA (205 aa).

The domain I stretch occupies residues 1-65; that stretch reads MIAKLKGILD…EDRIHLFGFL (65 aa). Positions 66–144 are domain II; it reads DNTEKVAFNM…NINTIANNTS (79 aa). A flexible linker region spans residues 145–153; that stretch reads LATLSTDSN. Positions 154–205 are domain III; the sequence is THDNILSDAITALIALGISRAEATQILSDIYALSPSISVNELVRTALQRRAK.

It belongs to the RuvA family. Homotetramer. Forms an RuvA(8)-RuvB(12)-Holliday junction (HJ) complex. HJ DNA is sandwiched between 2 RuvA tetramers; dsDNA enters through RuvA and exits via RuvB. An RuvB hexamer assembles on each DNA strand where it exits the tetramer. Each RuvB hexamer is contacted by two RuvA subunits (via domain III) on 2 adjacent RuvB subunits; this complex drives branch migration. In the full resolvosome a probable DNA-RuvA(4)-RuvB(12)-RuvC(2) complex forms which resolves the HJ.

The protein resides in the cytoplasm. The RuvA-RuvB-RuvC complex processes Holliday junction (HJ) DNA during genetic recombination and DNA repair, while the RuvA-RuvB complex plays an important role in the rescue of blocked DNA replication forks via replication fork reversal (RFR). RuvA specifically binds to HJ cruciform DNA, conferring on it an open structure. The RuvB hexamer acts as an ATP-dependent pump, pulling dsDNA into and through the RuvAB complex. HJ branch migration allows RuvC to scan DNA until it finds its consensus sequence, where it cleaves and resolves the cruciform DNA. This chain is Holliday junction branch migration complex subunit RuvA, found in Orientia tsutsugamushi (strain Ikeda) (Rickettsia tsutsugamushi).